The chain runs to 84 residues: Small ribosomal subunit protein bS16 (84 aa).

This sequence belongs to the bacterial ribosomal protein bS16 family.

The polypeptide is Small ribosomal subunit protein bS16 (Dechloromonas aromatica (strain RCB)).